Here is a 587-residue protein sequence, read N- to C-terminus: Glutathione hydrolase proenzyme (587 aa).

The signal sequence occupies residues 1–28 (MKRTWNVCLTALLSVLLVAGSVPFHAEA). A propeptide spanning residues 29–35 (KKPPKSY) is cleaved from the precursor. Residue Arg-113 coordinates L-glutamate. The Nucleophile role is filled by Thr-403. Residues Thr-421, Glu-423, Glu-442, Asp-445, 464 to 465 (SS), and 485 to 486 (GG) contribute to the L-glutamate site.

This sequence belongs to the gamma-glutamyltransferase family. As to quaternary structure, this enzyme consists of two polypeptide chains, which are synthesized in precursor form from a single polypeptide. Cleaved by autocatalysis into a large and small subunit.

Its subcellular location is the secreted. The enzyme catalyses an N-terminal (5-L-glutamyl)-[peptide] + an alpha-amino acid = 5-L-glutamyl amino acid + an N-terminal L-alpha-aminoacyl-[peptide]. It catalyses the reaction glutathione + H2O = L-cysteinylglycine + L-glutamate. The catalysed reaction is an S-substituted glutathione + H2O = an S-substituted L-cysteinylglycine + L-glutamate. It participates in sulfur metabolism; glutathione metabolism. Inhibited by glucose. Cleaves the gamma-glutamyl bond of extracellular glutathione (gamma-Glu-Cys-Gly), glutathione conjugates, and other gamma-glutamyl compounds. The metabolism of glutathione releases free glutamate and the dipeptide cysteinyl-glycine, which is hydrolyzed to cysteine and glycine by dipeptidases. Uses glutamine as a gamma-glutamyl donor and acceptor for gamma-polyglutamic acid synthesis. Dipeptides are better gamma-glutamyl acceptors than free amino acids. The protein is Glutathione hydrolase proenzyme (ggt) of Bacillus subtilis subsp. natto.